Here is a 141-residue protein sequence, read N- to C-terminus: Hemoglobin subunit alpha-D (141 aa).

Positions 1–141 (VLTAEDRRLL…VADVLCEKYR (141 aa)) constitute a Globin domain. Positions 58 and 87 each coordinate heme b.

It belongs to the globin family. Heterotetramer of two alpha chains and two beta chains. Red blood cells.

Functionally, involved in oxygen transport from the lung to the various peripheral tissues. This chain is Hemoglobin subunit alpha-D, found in Drymarchon melanurus erebennus (Texas indigo snake).